The following is a 132-amino-acid chain: ATP synthase epsilon chain (132 aa).

It belongs to the ATPase epsilon chain family. In terms of assembly, F-type ATPases have 2 components, CF(1) - the catalytic core - and CF(0) - the membrane proton channel. CF(1) has five subunits: alpha(3), beta(3), gamma(1), delta(1), epsilon(1). CF(0) has three main subunits: a, b and c.

The protein resides in the cell membrane. Its function is as follows. Produces ATP from ADP in the presence of a proton gradient across the membrane. The chain is ATP synthase epsilon chain from Bacillus velezensis (strain DSM 23117 / BGSC 10A6 / LMG 26770 / FZB42) (Bacillus amyloliquefaciens subsp. plantarum).